We begin with the raw amino-acid sequence, 305 residues long: Epoxyqueuosine reductase (305 aa).

Aspartate 128 (proton donor) is an active-site residue. Positions 170 to 202 (LSLTSDTPHAKYCGTCRKCLDICPTKAIVHPFV) constitute a 4Fe-4S ferredoxin-type domain. Residues cysteine 182, cysteine 185, cysteine 188, cysteine 192, cysteine 208, cysteine 236, cysteine 239, and cysteine 243 each coordinate [4Fe-4S] cluster.

The protein belongs to the QueG family. As to quaternary structure, monomer. Cob(II)alamin is required as a cofactor. [4Fe-4S] cluster serves as cofactor.

Its subcellular location is the cytoplasm. The catalysed reaction is epoxyqueuosine(34) in tRNA + AH2 = queuosine(34) in tRNA + A + H2O. Its pathway is tRNA modification; tRNA-queuosine biosynthesis. Functionally, catalyzes the conversion of epoxyqueuosine (oQ) to queuosine (Q), which is a hypermodified base found in the wobble positions of tRNA(Asp), tRNA(Asn), tRNA(His) and tRNA(Tyr). In Atelocyanobacterium thalassa (isolate ALOHA), this protein is Epoxyqueuosine reductase.